The following is a 499-amino-acid chain: MRLGCSGRRRRLLRAALLRLVVLVLVAPPRRCAGESATCLAVYREGGAPAVFQSAHCPRWTLLAPSAGSGGEGDGDRRSSSSSPPPPPHPRGCHVAVDRGRRRSQEDRAVCALGIRIPFIGIYHKIKEVDVGVVAVFDGHNGAEASEMASKLLLEYFLLHVYFLLDGIYSIMFRKSTGKLTYKEVTILNNVINLYKEDQSSHSKGSCWALPAILDRSFHMEVLKESLLRAVHDVDLTFSKEALRNNFESGSTAAVILIVDGQIIAANVGDSKAFLCSESHDSSIDKKTSVVSGKRRRKRNSNNRDDFALANYDGPFYNVKELTKDHHPDREDERSRVEAAGGYVLEWAGVHRVNGELALSRAIGDVPYKRYGVIPTPELTEWQSLSANDTFLIASSDGVFEKMTMQDVCDLMLRVKLGVNQELGSFAVTQRNLADYVVDLALEKGTTDNVAAVIVPLGSHYSSKVTLEDWYMLEENSKTSISPLQTIPYQQKSGRFNVQ.

The N-terminal stretch at 1 to 34 is a signal peptide; sequence MRLGCSGRRRRLLRAALLRLVVLVLVAPPRRCAG. The segment at 67–101 is disordered; it reads AGSGGEGDGDRRSSSSSPPPPPHPRGCHVAVDRGR. The PPM-type phosphatase domain maps to 92-457; it reads GCHVAVDRGR…DNVAAVIVPL (366 aa). Positions 138 and 139 each coordinate Mn(2+). Positions 286 to 306 are disordered; that stretch reads KKTSVVSGKRRRKRNSNNRDD. Mn(2+) is bound by residues Asp-397 and Asp-448.

It belongs to the PP2C family. Mg(2+) serves as cofactor. Requires Mn(2+) as cofactor.

The catalysed reaction is O-phospho-L-seryl-[protein] + H2O = L-seryl-[protein] + phosphate. It catalyses the reaction O-phospho-L-threonyl-[protein] + H2O = L-threonyl-[protein] + phosphate. This Oryza sativa subsp. japonica (Rice) protein is Putative protein phosphatase 2C 76.